A 320-amino-acid polypeptide reads, in one-letter code: Malate dehydrogenase (320 aa).

Residues 10-15 (GAGQIG) and D34 each bind NAD(+). Substrate is bound by residues R83 and R89. NAD(+)-binding positions include N96 and 119 to 121 (ITN). The substrate site is built by N121 and R152. H176 acts as the Proton acceptor in catalysis.

Belongs to the LDH/MDH superfamily. MDH type 3 family.

It catalyses the reaction (S)-malate + NAD(+) = oxaloacetate + NADH + H(+). Functionally, catalyzes the reversible oxidation of malate to oxaloacetate. The sequence is that of Malate dehydrogenase from Methylorubrum populi (strain ATCC BAA-705 / NCIMB 13946 / BJ001) (Methylobacterium populi).